A 372-amino-acid polypeptide reads, in one-letter code: N-methyl-L-tryptophan oxidase (372 aa).

4–34 contacts FAD; sequence DLIIIGSGSVGAAAGYYATRAGLKVLMTDAH. Cysteine 307 bears the S-8alpha-FAD cysteine mark.

Belongs to the MSOX/MTOX family. MTOX subfamily. As to quaternary structure, monomer. FAD serves as cofactor.

The enzyme catalyses N(alpha)-methyl-L-tryptophan + O2 + H2O = L-tryptophan + formaldehyde + H2O2. In terms of biological role, catalyzes the oxidative demethylation of N-methyl-L-tryptophan. The protein is N-methyl-L-tryptophan oxidase of Salmonella arizonae (strain ATCC BAA-731 / CDC346-86 / RSK2980).